The sequence spans 184 residues: ATP synthase subunit delta (184 aa).

This sequence belongs to the ATPase delta chain family. In terms of assembly, F-type ATPases have 2 components, F(1) - the catalytic core - and F(0) - the membrane proton channel. F(1) has five subunits: alpha(3), beta(3), gamma(1), delta(1), epsilon(1). F(0) has three main subunits: a(1), b(2) and c(10-14). The alpha and beta chains form an alternating ring which encloses part of the gamma chain. F(1) is attached to F(0) by a central stalk formed by the gamma and epsilon chains, while a peripheral stalk is formed by the delta and b chains.

The protein localises to the cell inner membrane. Functionally, f(1)F(0) ATP synthase produces ATP from ADP in the presence of a proton or sodium gradient. F-type ATPases consist of two structural domains, F(1) containing the extramembraneous catalytic core and F(0) containing the membrane proton channel, linked together by a central stalk and a peripheral stalk. During catalysis, ATP synthesis in the catalytic domain of F(1) is coupled via a rotary mechanism of the central stalk subunits to proton translocation. In terms of biological role, this protein is part of the stalk that links CF(0) to CF(1). It either transmits conformational changes from CF(0) to CF(1) or is implicated in proton conduction. The sequence is that of ATP synthase subunit delta from Caulobacter sp. (strain K31).